The sequence spans 347 residues: Gentisate 1,2 dioxygenase 1 (347 aa).

Residues 96–163 enclose the Cupin type-2 domain; that stretch reads LQLILPGEVA…DSDKPMIWMD (68 aa).

Belongs to the gentisate 1,2-dioxygenase family. Homotetramer. Fe(2+) is required as a cofactor.

The catalysed reaction is 2,5-dihydroxybenzoate + O2 = 3-maleylpyruvate + H(+). Its activity is regulated as follows. Completely inhibited by the presence of 5 mM Cu(2+). Partially inhibited with 5 mM Mn(2+), Zn(2+) or EDTA. Involved in the degradation of gentisate. Catalyzes the conversion of gentisate (2,5-dihydroxybenzoate) to maleylpyruvate. Exhibits broad substrate specificities towards alkyl and halogenated gentisates. The polypeptide is Gentisate 1,2 dioxygenase 1 (Aquipseudomonas alcaligenes (Pseudomonas alcaligenes)).